The following is a 178-amino-acid chain: Probetacellulin (178 aa).

The N-terminal stretch at 1 to 31 is a signal peptide; that stretch reads MDRAARCSGASSLPLLLALALGLVILHCVVA. Residues 32–118 lie on the Extracellular side of the membrane; that stretch reads DGNSTRSPET…LFYLRGDRGQ (87 aa). Residue Asn-34 is glycosylated (N-linked (GlcNAc...) asparagine). The EGF-like domain maps to 65 to 105; it reads HFSRCPKQYKHYCIKGRCRFVVAEQTPSCVCDEGYIGARCE. 3 disulfide bridges follow: Cys-69/Cys-82, Cys-77/Cys-93, and Cys-95/Cys-104. The propeptide at 112–178 is removed in mature form; it reads LRGDRGQILV…NEDIEETNIA (67 aa). A helical transmembrane segment spans residues 119 to 139; it reads ILVICLIAVMVVFIILVIGVC. Topologically, residues 140-178 are cytoplasmic; sequence TCCHPLRKRRKRKKKEEEMETLGKDITPINEDIEETNIA.

In terms of assembly, monomer. Interacts with EGFR and ERBB4. As to expression, synthesized in several tissues and tumor cells. Predominantly expressed in pancreas and small intestine.

Its subcellular location is the secreted. It is found in the extracellular space. The protein localises to the cell membrane. Functionally, growth factor that binds to EGFR, ERBB4 and other EGF receptor family members. Potent mitogen for retinal pigment epithelial cells and vascular smooth muscle cells. The protein is Probetacellulin (BTC) of Homo sapiens (Human).